A 160-amino-acid chain; its full sequence is SsrA-binding protein (160 aa).

Residues 135–160 (KTHDKRETIKERDWKREQSRILRDRG) form a disordered region. A compositionally biased stretch (basic and acidic residues) spans 138–160 (DKRETIKERDWKREQSRILRDRG).

Belongs to the SmpB family.

The protein resides in the cytoplasm. Its function is as follows. Required for rescue of stalled ribosomes mediated by trans-translation. Binds to transfer-messenger RNA (tmRNA), required for stable association of tmRNA with ribosomes. tmRNA and SmpB together mimic tRNA shape, replacing the anticodon stem-loop with SmpB. tmRNA is encoded by the ssrA gene; the 2 termini fold to resemble tRNA(Ala) and it encodes a 'tag peptide', a short internal open reading frame. During trans-translation Ala-aminoacylated tmRNA acts like a tRNA, entering the A-site of stalled ribosomes, displacing the stalled mRNA. The ribosome then switches to translate the ORF on the tmRNA; the nascent peptide is terminated with the 'tag peptide' encoded by the tmRNA and targeted for degradation. The ribosome is freed to recommence translation, which seems to be the essential function of trans-translation. This is SsrA-binding protein from Sphingomonas elodea.